The following is a 642-amino-acid chain: Putative ATP-binding protein YdiF (642 aa).

ABC transporter domains follow at residues 4–259 and 327–541; these read LQVN…EKDL and LRVQ…ELEK. ATP is bound by residues 36-43 and 360-367; these read GRNGAGKS and GPNGIGKS. 2 stretches are compositionally biased toward basic and acidic residues: residues 541–550 and 557–567; these read KMNQQEETDK and SDSKRSYEEEK. Positions 541–567 are disordered; the sequence is KMNQQEETDKTPATVKSDSKRSYEEEK.

Belongs to the ABC transporter superfamily. ABCF family. YdiF subfamily.

The chain is Putative ATP-binding protein YdiF (ydiF) from Bacillus subtilis (strain 168).